A 349-amino-acid chain; its full sequence is Succinylglutamate desuccinylase (349 aa).

Zn(2+) contacts are provided by His70, Glu73, and His166. The active site involves Glu229.

The protein belongs to the AspA/AstE family. Succinylglutamate desuccinylase subfamily. The cofactor is Zn(2+).

The enzyme catalyses N-succinyl-L-glutamate + H2O = L-glutamate + succinate. It participates in amino-acid degradation; L-arginine degradation via AST pathway; L-glutamate and succinate from L-arginine: step 5/5. Transforms N(2)-succinylglutamate into succinate and glutamate. The protein is Succinylglutamate desuccinylase of Burkholderia mallei (strain ATCC 23344).